The following is a 201-amino-acid chain: dITP/XTP pyrophosphatase (201 aa).

Residue 9–14 coordinates substrate; the sequence is TRNSGK. Positions 42 and 71 each coordinate Mg(2+). Residue Asp-71 is the Proton acceptor of the active site. Substrate contacts are provided by residues Ser-72, 156-159, Lys-178, and 183-184; these read FGYD and HR.

It belongs to the HAM1 NTPase family. As to quaternary structure, homodimer. It depends on Mg(2+) as a cofactor.

It carries out the reaction XTP + H2O = XMP + diphosphate + H(+). The catalysed reaction is dITP + H2O = dIMP + diphosphate + H(+). The enzyme catalyses ITP + H2O = IMP + diphosphate + H(+). Its function is as follows. Pyrophosphatase that catalyzes the hydrolysis of nucleoside triphosphates to their monophosphate derivatives, with a high preference for the non-canonical purine nucleotides XTP (xanthosine triphosphate), dITP (deoxyinosine triphosphate) and ITP. Seems to function as a house-cleaning enzyme that removes non-canonical purine nucleotides from the nucleotide pool, thus preventing their incorporation into DNA/RNA and avoiding chromosomal lesions. This is dITP/XTP pyrophosphatase (ynbD) from Lactococcus lactis subsp. lactis (strain IL1403) (Streptococcus lactis).